A 295-amino-acid polypeptide reads, in one-letter code: UDP-3-O-acyl-N-acetylglucosamine deacetylase (295 aa).

Residues His77, His233, and Asp237 each coordinate Zn(2+). His260 acts as the Proton donor in catalysis.

It belongs to the LpxC family. It depends on Zn(2+) as a cofactor.

The enzyme catalyses a UDP-3-O-[(3R)-3-hydroxyacyl]-N-acetyl-alpha-D-glucosamine + H2O = a UDP-3-O-[(3R)-3-hydroxyacyl]-alpha-D-glucosamine + acetate. It functions in the pathway glycolipid biosynthesis; lipid IV(A) biosynthesis; lipid IV(A) from (3R)-3-hydroxytetradecanoyl-[acyl-carrier-protein] and UDP-N-acetyl-alpha-D-glucosamine: step 2/6. Its function is as follows. Catalyzes the hydrolysis of UDP-3-O-myristoyl-N-acetylglucosamine to form UDP-3-O-myristoylglucosamine and acetate, the committed step in lipid A biosynthesis. This chain is UDP-3-O-acyl-N-acetylglucosamine deacetylase, found in Solibacter usitatus (strain Ellin6076).